A 101-amino-acid polypeptide reads, in one-letter code: Urease subunit beta (101 aa).

This sequence belongs to the urease beta subunit family. Heterotrimer of UreA (gamma), UreB (beta) and UreC (alpha) subunits. Three heterotrimers associate to form the active enzyme.

It localises to the cytoplasm. The catalysed reaction is urea + 2 H2O + H(+) = hydrogencarbonate + 2 NH4(+). Its pathway is nitrogen metabolism; urea degradation; CO(2) and NH(3) from urea (urease route): step 1/1. In Rhizobium etli (strain ATCC 51251 / DSM 11541 / JCM 21823 / NBRC 15573 / CFN 42), this protein is Urease subunit beta.